The chain runs to 394 residues: ATP phosphoribosyltransferase regulatory subunit (394 aa).

It belongs to the class-II aminoacyl-tRNA synthetase family. HisZ subfamily. As to quaternary structure, heteromultimer composed of HisG and HisZ subunits.

It is found in the cytoplasm. The protein operates within amino-acid biosynthesis; L-histidine biosynthesis; L-histidine from 5-phospho-alpha-D-ribose 1-diphosphate: step 1/9. Required for the first step of histidine biosynthesis. May allow the feedback regulation of ATP phosphoribosyltransferase activity by histidine. This chain is ATP phosphoribosyltransferase regulatory subunit, found in Pseudomonas paraeruginosa (strain DSM 24068 / PA7) (Pseudomonas aeruginosa (strain PA7)).